A 607-amino-acid polypeptide reads, in one-letter code: Matrix metalloproteinase-16 (607 aa).

Positions 1-31 (MILLAFSSGRRLDFVHRSGVFFFQTLLWILC) are cleaved as a signal peptide. Positions 32-119 (ATVCGTEQYF…SSKFNIRRKR (88 aa)) are excised as a propeptide. An N-linked (GlcNAc...) asparagine glycan is attached at Asn83. The Cysteine switch motif lies at 99-106 (PRCGVPDQ). Cys101 contributes to the Zn(2+) binding site. Topologically, residues 120 to 564 (YALTGQKWQH…LDNTASTVKA (445 aa)) are extracellular. Residue Asp183 coordinates Ca(2+). Residues His193 and Asp195 each coordinate Zn(2+). Residues Asp200, Gly201, Gly203, and Phe205 each contribute to the Ca(2+) site. His208 serves as a coordination point for Zn(2+). Residues Gly215, Gly217, and Asp219 each coordinate Ca(2+). Residue His221 participates in Zn(2+) binding. Residues Asp223 and Glu226 each coordinate Ca(2+). His246 is a Zn(2+) binding site. The active site involves Glu247. The Zn(2+) site is built by His250 and His256. The disordered stretch occupies residues 281–340 (DDLQGIQKIYGPPDKIPPPTRPLPTVPPHRSVPPADPRKNDRPKPPRPPTGRPSYPGAKP). Positions 294–315 (DKIPPPTRPLPTVPPHRSVPPA) are enriched in pro residues. Hemopexin repeat units lie at residues 340-388 (PNIC…WRGL), 389-434 (PPSI…GNGI), 436-484 (PHGI…KGIP), and 485-532 (ESPQ…FMGC). Cys343 and Cys532 form a disulfide bridge. A helical membrane pass occupies residues 565-585 (IAIVIPCILALCLLVLVYTVF). Topologically, residues 586-607 (QFKRKGTPRHILYCKRSMQEWV) are cytoplasmic.

This sequence belongs to the peptidase M10A family. Interacts with CSPG4 through CSPG4 chondroitin sulfate glycosaminoglycan. Zn(2+) serves as cofactor. Requires Ca(2+) as cofactor. In terms of processing, the precursor is cleaved by a furin endopeptidase. As to expression, strongly expressed in the lung, brain and smooth muscle cells. Weakly detectable in the spleen and liver and indetectable in the heart, skeletal muscle and kidney.

The protein localises to the cell membrane. The protein resides in the secreted. It is found in the extracellular space. Its subcellular location is the extracellular matrix. Functionally, endopeptidase that degrades various components of the extracellular matrix, such as collagen type III and fibronectin. Activates progelatinase A. Involved in the matrix remodeling of blood vessels. The short isoform efficiently converts progelatinase A to the intermediate form but not to the mature one. It has no effect on type I, II, IV and V collagen. However, upon interaction with CSPG4, it may be involved in degradation and invasion of type I collagen by melanoma cells. In Rattus norvegicus (Rat), this protein is Matrix metalloproteinase-16 (Mmp16).